The chain runs to 43 residues: uncharacterized protein (43 aa).

The disordered stretch occupies residues 13 to 43 (QLPRLSRPRQSHLPAQTPQPRLSYPKTRRQI).

This is an uncharacterized protein from Clover yellow mosaic virus (CYMV).